A 239-amino-acid polypeptide reads, in one-letter code: Acidic leucine-rich nuclear phosphoprotein 32 family member B (239 aa).

LRR repeat units follow at residues 16 to 40 (AADA…LTSE), 43 to 64 (SLEF…PKLP), 65 to 87 (KLKK…AERT), and 89 to 110 (NLTH…EPLK). In terms of domain architecture, LRRCT spans 123–165 (CEVTMLNNYRESVFELLPKLTFLDGFDADDQEAPDSDPEAEDL). Over residues 149-215 (DADDQEAPDS…EEDEDDEDVP (67 aa)) the composition is skewed to acidic residues. Positions 149-239 (DADDQEAPDS…EEEEDDEDDE (91 aa)) are disordered. The span at 216–225 (QGEKRKRDLS) shows a compositional bias: basic and acidic residues. The segment covering 226-239 (DEGEEEEEDDEDDE) has biased composition (acidic residues).

The protein belongs to the ANP32 family.

The protein resides in the nucleus. Multifunctional protein working as a cell cycle progression factor as well as a cell survival factor. Required for the progression from the G1 to the S phase. Anti-apoptotic protein which functions as a caspase-3 inhibitor. Has no phosphatase 2A (PP2A) inhibitor activity. Exhibits histone chaperone properties, stimulating core histones to assemble into a nucleosome. The protein is Acidic leucine-rich nuclear phosphoprotein 32 family member B (anp32b) of Xenopus laevis (African clawed frog).